The following is an 88-amino-acid chain: Phosphocarrier protein HPr (88 aa).

Residues 1 to 88 (MEQNSYVIID…DVLSKEGLTK (88 aa)) form the HPr domain. The Pros-phosphohistidine intermediate role is filled by H15. Position 46 is a phosphoserine; by HPrK/P (S46).

The protein resides in the cytoplasm. With respect to regulation, phosphorylation on Ser-46 inhibits the phosphoryl transfer from enzyme I to HPr. In terms of biological role, general (non sugar-specific) component of the phosphoenolpyruvate-dependent sugar phosphotransferase system (sugar PTS). This major carbohydrate active-transport system catalyzes the phosphorylation of incoming sugar substrates concomitantly with their translocation across the cell membrane. The phosphoryl group from phosphoenolpyruvate (PEP) is transferred to the phosphoryl carrier protein HPr by enzyme I. Phospho-HPr then transfers it to the PTS EIIA domain. P-Ser-HPr interacts with the catabolite control protein A (CcpA), forming a complex that binds to DNA at the catabolite response elements cre, operator sites preceding a large number of catabolite-regulated genes. Thus, P-Ser-HPr is a corepressor in carbon catabolite repression (CCR), a mechanism that allows bacteria to coordinate and optimize the utilization of available carbon sources. P-Ser-HPr also plays a role in inducer exclusion, in which it probably interacts with several non-PTS permeases and inhibits their transport activity. This chain is Phosphocarrier protein HPr (ptsH), found in Staphylococcus aureus (strain MSSA476).